A 102-amino-acid polypeptide reads, in one-letter code: Integration host factor subunit alpha (102 aa).

This sequence belongs to the bacterial histone-like protein family. In terms of assembly, heterodimer of an alpha and a beta chain.

In terms of biological role, this protein is one of the two subunits of integration host factor, a specific DNA-binding protein that functions in genetic recombination as well as in transcriptional and translational control. The chain is Integration host factor subunit alpha from Buchnera aphidicola subsp. Acyrthosiphon pisum (strain 5A).